The following is a 627-amino-acid chain: Phosphomethylpyrimidine synthase (627 aa).

The segment at 1-21 (MSVQSNKNLSESAQVDQQSIQ) is disordered. Substrate is bound by residues asparagine 231, methionine 260, tyrosine 289, histidine 325, 345–347 (SRG), 386–389 (DGLR), and glutamate 425. Histidine 429 is a Zn(2+) binding site. Tyrosine 452 lines the substrate pocket. Histidine 493 lines the Zn(2+) pocket. [4Fe-4S] cluster is bound by residues cysteine 573, cysteine 576, and cysteine 581.

It belongs to the ThiC family. In terms of assembly, homodimer. Requires [4Fe-4S] cluster as cofactor.

It catalyses the reaction 5-amino-1-(5-phospho-beta-D-ribosyl)imidazole + S-adenosyl-L-methionine = 4-amino-2-methyl-5-(phosphooxymethyl)pyrimidine + CO + 5'-deoxyadenosine + formate + L-methionine + 3 H(+). It functions in the pathway cofactor biosynthesis; thiamine diphosphate biosynthesis. Functionally, catalyzes the synthesis of the hydroxymethylpyrimidine phosphate (HMP-P) moiety of thiamine from aminoimidazole ribotide (AIR) in a radical S-adenosyl-L-methionine (SAM)-dependent reaction. The sequence is that of Phosphomethylpyrimidine synthase from Stutzerimonas stutzeri (strain A1501) (Pseudomonas stutzeri).